The sequence spans 1080 residues: Presequence protease 1, chloroplastic/mitochondrial (1080 aa).

A chloroplast and mitochondrion-targeting transit peptide spans 1–85 (MLRTVSCLAS…GQFSRLSVRA (85 aa)). At Val-86 the chain carries N-acetylvaline. His-162 is a binding site for Zn(2+). The active-site Proton acceptor is Glu-165. His-166 contributes to the Zn(2+) binding site. The active site involves Glu-240. Glu-262 is a Zn(2+) binding site. A coiled-coil region spans residues 571 to 612 (EKATQEEVEEKNILEKVKAAMTEEDLAELARATEELKLKQET). Arg-705 provides a ligand contact to Mg(2+).

The protein belongs to the peptidase M16 family. PreP subfamily. In terms of assembly, homodimer. Requires Zn(2+) as cofactor. Mg(2+) is required as a cofactor. In terms of tissue distribution, expressed only in siliques and flowers.

The protein resides in the plastid. It is found in the chloroplast stroma. It localises to the mitochondrion matrix. Inactive in the absence of MgCl(2) and CaCl(2) and full activation at 10 mM concentrations of either ion. Completely inhibited by the metal chelator orthophenanthroline, but not affected by phenylmethylsulfonyl fluoride (PMSF) or N-ethylmaleimide (NEM). Its function is as follows. ATP-independent protease that degrades both mitochondrial and chloroplastic transit peptides after their cleavage. Also degrades other unstructured peptides. Specific for peptides in the range of 10 to 65 residues. Shows a preference for cleavage after small polar residues and before basic residues, with a bias for positively charged amino acid residues. This Arabidopsis thaliana (Mouse-ear cress) protein is Presequence protease 1, chloroplastic/mitochondrial (PREP1).